The chain runs to 142 residues: Large ribosomal subunit protein uL13 (142 aa).

The protein belongs to the universal ribosomal protein uL13 family. In terms of assembly, part of the 50S ribosomal subunit.

Functionally, this protein is one of the early assembly proteins of the 50S ribosomal subunit, although it is not seen to bind rRNA by itself. It is important during the early stages of 50S assembly. The chain is Large ribosomal subunit protein uL13 from Pseudomonas entomophila (strain L48).